The sequence spans 122 residues: Large ribosomal subunit protein uL14c (122 aa).

This sequence belongs to the universal ribosomal protein uL14 family. Part of the 50S ribosomal subunit.

It localises to the plastid. Its subcellular location is the chloroplast. Binds to 23S rRNA. This chain is Large ribosomal subunit protein uL14c, found in Zygnema circumcarinatum (Green alga).